Consider the following 290-residue polypeptide: TIP41-like protein (290 aa).

The protein belongs to the TIP41 family. Interacts with TAP46. In terms of tissue distribution, widely expressed.

Its function is as follows. May be involved in the regulation of the TOR signaling pathway. Indirectly activates the PP2A phosphatase via interaction with its suppressor TAP46. Could play a role in cytoskeleton functions. In Arabidopsis thaliana (Mouse-ear cress), this protein is TIP41-like protein.